The following is a 45-amino-acid chain: Photosystem II reaction center protein K (45 aa).

A propeptide spanning residues 1–8 is cleaved from the precursor; sequence MNSALFLA. The chain crosses the membrane as a helical span at residues 23–43; that stretch reads ILPVIPVFFLLLAFVWQAAIG.

Belongs to the PsbK family. As to quaternary structure, PSII is composed of 1 copy each of membrane proteins PsbA, PsbB, PsbC, PsbD, PsbE, PsbF, PsbH, PsbI, PsbJ, PsbK, PsbL, PsbM, PsbT, PsbX, PsbY, PsbZ, Psb30/Ycf12, at least 3 peripheral proteins of the oxygen-evolving complex and a large number of cofactors. It forms dimeric complexes.

Its subcellular location is the plastid. It is found in the chloroplast thylakoid membrane. Its function is as follows. One of the components of the core complex of photosystem II (PSII). PSII is a light-driven water:plastoquinone oxidoreductase that uses light energy to abstract electrons from H(2)O, generating O(2) and a proton gradient subsequently used for ATP formation. It consists of a core antenna complex that captures photons, and an electron transfer chain that converts photonic excitation into a charge separation. The chain is Photosystem II reaction center protein K from Porphyra purpurea (Red seaweed).